Here is a 211-residue protein sequence, read N- to C-terminus: Large ribosomal subunit protein uL3 (211 aa).

Gln150 is modified (N5-methylglutamine).

This sequence belongs to the universal ribosomal protein uL3 family. Part of the 50S ribosomal subunit. Forms a cluster with proteins L14 and L19. Methylated by PrmB.

In terms of biological role, one of the primary rRNA binding proteins, it binds directly near the 3'-end of the 23S rRNA, where it nucleates assembly of the 50S subunit. This chain is Large ribosomal subunit protein uL3, found in Pseudomonas syringae pv. tomato (strain ATCC BAA-871 / DC3000).